A 516-amino-acid chain; its full sequence is Nucleolar complex protein 4 homolog (516 aa).

3 helical membrane passes run 297–317, 347–367, and 375–395; these read ACDL…ILIH, FFHL…LVAA, and LALT…CNLL.

It belongs to the CBF/MAK21 family.

It localises to the nucleus membrane. The protein resides in the nucleus. Its subcellular location is the nucleolus. In Homo sapiens (Human), this protein is Nucleolar complex protein 4 homolog (NOC4L).